A 560-amino-acid chain; its full sequence is Chaperonin GroEL 2 (560 aa).

ATP-binding positions include 29–32 (TIGP), 86–90 (DGTTT), Gly413, and Asp492. The segment at 520–542 (DKPEPPSAPGAEGGDPMGGMGGM) is disordered. The segment covering 530–542 (AEGGDPMGGMGGM) has biased composition (gly residues).

It belongs to the chaperonin (HSP60) family. Forms a cylinder of 14 subunits composed of two heptameric rings stacked back-to-back. Interacts with the co-chaperonin GroES.

It localises to the cytoplasm. The enzyme catalyses ATP + H2O + a folded polypeptide = ADP + phosphate + an unfolded polypeptide.. Together with its co-chaperonin GroES, plays an essential role in assisting protein folding. The GroEL-GroES system forms a nano-cage that allows encapsulation of the non-native substrate proteins and provides a physical environment optimized to promote and accelerate protein folding. This is Chaperonin GroEL 2 from Prochlorococcus marinus (strain NATL2A).